The sequence spans 333 residues: MPARGGSARPGRGALKPVSVTLLPDTEQPPFLGRARRPGNARAGSLVTGYHEVGQMPAPLSRKIGQKKQRLADSEQQQTPKERLLSTPGLRRSIYFSSPEDHSGRLGPEFFDQPAVTLARAFLGQVLVRRLADGTELRGRIVETEAYLGPEDEAAHSRGGRQTPRNRGMFMKPGTLYVYLIYGMYFCLNVSSQGAGACVLLRALEPLEGLETMRQLRNSLRKSTVGRSLKDRELCSGPSKLCQALAIDKSFDQRDLAQDDAVWLEHGPLESSSPAVVVAAARIGIGHAGEWTQKPLRFYVQGSPWVSVVDRVAEQMDQPQQTACSEGLLIVQK.

Positions 1-14 are enriched in low complexity; the sequence is MPARGGSARPGRGA. The disordered stretch occupies residues 1–42; it reads MPARGGSARPGRGALKPVSVTLLPDTEQPPFLGRARRPGNAR. A phosphoserine mark is found at Ser98 and Ser272.

This sequence belongs to the DNA glycosylase MPG family. In terms of assembly, binds MBD1. Binds SSBP1.

It localises to the cytoplasm. The protein localises to the mitochondrion matrix. The protein resides in the mitochondrion nucleoid. It is found in the nucleus. The catalysed reaction is Hydrolysis of alkylated DNA, releasing 3-methyladenine, 3-methylguanine, 7-methylguanine and 7-methyladenine.. Its activity is regulated as follows. Binding to SSBP1 in mitochondria inhibits glycosylase activity in the context of a single-stranded DNA (ssDNA), but not a double-stranded DNA (dsDNA) substrates. Functionally, hydrolysis of the deoxyribose N-glycosidic bond to excise 3-methyladenine, and 7-methylguanine from the damaged DNA polymer formed by alkylation lesions. The polypeptide is DNA-3-methyladenine glycosylase (Mpg) (Mus musculus (Mouse)).